A 235-amino-acid polypeptide reads, in one-letter code: tRNA pseudouridine synthase B (235 aa).

D45 acts as the Nucleophile in catalysis.

The protein belongs to the pseudouridine synthase TruB family. Type 1 subfamily.

The enzyme catalyses uridine(55) in tRNA = pseudouridine(55) in tRNA. Responsible for synthesis of pseudouridine from uracil-55 in the psi GC loop of transfer RNAs. This chain is tRNA pseudouridine synthase B, found in Chlamydia pneumoniae (Chlamydophila pneumoniae).